Here is a 542-residue protein sequence, read N- to C-terminus: MARYVFITGGVVSSLGKGIAAAALGALLQARGYRVRLRKLDPYLNVDPGTMSPTQHGEVFVTDDGAETDLDLGHYERFTGRSATKTDNITTGRIYKNIIDKERRGDYLGATVQVIPHVTNEIKNFVTEGNEDYDFVICEIGGTVGDIEAMPFMEAIRQLGNDLPRGTAVYVHLTLMPYIPAAGELKTKPTQHSVKELQALGIHPDILLVRADREIPEAERRKLSLFCNVRQSAVIQALDVASIYDVPIAYHKEGLDNEVLAAFGIEPAPKPRMEAWEDVAHRIRTPEGEVTIAIVGKYTGLKDAYKSLIEALYHGGIANRVKVKLEWIESEVFEKEDPAPYLEKVHGILVPGGFGERGSEGKINAARFARERKVPYFGICFGMQMAVVEAARNLAGIEKASSTEFGPTKEPVVGLMTEWVKGNELEKRSAAGDLGGTMRLGAYRAALKPDTKIAGIYGSPDISERHRHRYEVNVDYKSRLESCGLVFSGMSPDGVLPETIEYPDHPWFIGVQYHPELKSRPLDPHPLFSSFIEAALEQSRLV.

The tract at residues 1-265 is amidoligase domain; the sequence is MARYVFITGG…DNEVLAAFGI (265 aa). Serine 13 contributes to the CTP binding site. Residue serine 13 coordinates UTP. ATP contacts are provided by residues 14 to 19 and aspartate 71; that span reads SLGKGI. Mg(2+)-binding residues include aspartate 71 and glutamate 139. CTP contacts are provided by residues 146 to 148, 186 to 191, and lysine 222; these read DIE and KTKPTQ. Residues 186-191 and lysine 222 each bind UTP; that span reads KTKPTQ. The 251-residue stretch at 291 to 541 folds into the Glutamine amidotransferase type-1 domain; that stretch reads TIAIVGKYTG…IEAALEQSRL (251 aa). Residue glycine 353 coordinates L-glutamine. The active-site Nucleophile; for glutamine hydrolysis is the cysteine 380. Residues 381-384, glutamate 404, and arginine 469 each bind L-glutamine; that span reads FGMQ. Active-site residues include histidine 514 and glutamate 516.

It belongs to the CTP synthase family. In terms of assembly, homotetramer.

The catalysed reaction is UTP + L-glutamine + ATP + H2O = CTP + L-glutamate + ADP + phosphate + 2 H(+). The enzyme catalyses L-glutamine + H2O = L-glutamate + NH4(+). It carries out the reaction UTP + NH4(+) + ATP = CTP + ADP + phosphate + 2 H(+). Its pathway is pyrimidine metabolism; CTP biosynthesis via de novo pathway; CTP from UDP: step 2/2. Its activity is regulated as follows. Allosterically activated by GTP, when glutamine is the substrate; GTP has no effect on the reaction when ammonia is the substrate. The allosteric effector GTP functions by stabilizing the protein conformation that binds the tetrahedral intermediate(s) formed during glutamine hydrolysis. Inhibited by the product CTP, via allosteric rather than competitive inhibition. In terms of biological role, catalyzes the ATP-dependent amination of UTP to CTP with either L-glutamine or ammonia as the source of nitrogen. Regulates intracellular CTP levels through interactions with the four ribonucleotide triphosphates. The chain is CTP synthase from Rhizobium meliloti (strain 1021) (Ensifer meliloti).